The following is a 352-amino-acid chain: Uroporphyrinogen decarboxylase (352 aa).

Substrate-binding positions include Arg26 to Arg30, Phe45, Asp76, Tyr153, Ser208, and His323.

This sequence belongs to the uroporphyrinogen decarboxylase family. Homodimer.

The protein resides in the cytoplasm. It carries out the reaction uroporphyrinogen III + 4 H(+) = coproporphyrinogen III + 4 CO2. Its pathway is porphyrin-containing compound metabolism; protoporphyrin-IX biosynthesis; coproporphyrinogen-III from 5-aminolevulinate: step 4/4. Functionally, catalyzes the decarboxylation of four acetate groups of uroporphyrinogen-III to yield coproporphyrinogen-III. This chain is Uroporphyrinogen decarboxylase, found in Parasynechococcus marenigrum (strain WH8102).